A 684-amino-acid chain; its full sequence is UvrABC system protein B (684 aa).

Residues 32–420 (DGVLRGDRWQ…GGVVVEQLIR (389 aa)) enclose the Helicase ATP-binding domain. 45-52 (GVTGSGKT) contributes to the ATP binding site. The Beta-hairpin motif lies at 98 to 121 (YYDFYQPEAYIPSLDKYIAKDLKI). Residues 437-603 (QIDHLLARIR…SIIKSVDQVL (167 aa)) enclose the Helicase C-terminal domain. One can recognise a UVR domain in the interval 643 to 678 (MLMVAEMNAEMQKAAEQTDYEKAAYLRDEILMLQER).

The protein belongs to the UvrB family. Forms a heterotetramer with UvrA during the search for lesions. Interacts with UvrC in an incision complex.

Its subcellular location is the cytoplasm. In terms of biological role, the UvrABC repair system catalyzes the recognition and processing of DNA lesions. A damage recognition complex composed of 2 UvrA and 2 UvrB subunits scans DNA for abnormalities. Upon binding of the UvrA(2)B(2) complex to a putative damaged site, the DNA wraps around one UvrB monomer. DNA wrap is dependent on ATP binding by UvrB and probably causes local melting of the DNA helix, facilitating insertion of UvrB beta-hairpin between the DNA strands. Then UvrB probes one DNA strand for the presence of a lesion. If a lesion is found the UvrA subunits dissociate and the UvrB-DNA preincision complex is formed. This complex is subsequently bound by UvrC and the second UvrB is released. If no lesion is found, the DNA wraps around the other UvrB subunit that will check the other stand for damage. This Chlorobaculum tepidum (strain ATCC 49652 / DSM 12025 / NBRC 103806 / TLS) (Chlorobium tepidum) protein is UvrABC system protein B.